The primary structure comprises 207 residues: MAKLDVFDIKKAKVGEIELDDAVFNDDVREYLIHEAVKIQLANRRQGTVAVKNRALVAGSGKKPFKQKGTGQARQGCRRAPQYPGGGVAFGPQPKDYNLSMNKKARKAALRSALSMLYKKDAITVVNSLELPSIKTKAFVEVLTAFNLDKTLVITDTATPTLELSARNVKHVKVLGPEGLNIFDIMKYQSVVFTEAAVRRVEGALQS.

The tract at residues 62–85 (KKPFKQKGTGQARQGCRRAPQYPG) is disordered.

Belongs to the universal ribosomal protein uL4 family. As to quaternary structure, part of the 50S ribosomal subunit.

Its function is as follows. One of the primary rRNA binding proteins, this protein initially binds near the 5'-end of the 23S rRNA. It is important during the early stages of 50S assembly. It makes multiple contacts with different domains of the 23S rRNA in the assembled 50S subunit and ribosome. In terms of biological role, forms part of the polypeptide exit tunnel. This chain is Large ribosomal subunit protein uL4, found in Geobacter sp. (strain M21).